Reading from the N-terminus, the 483-residue chain is MGNEVRVRYAPSPTGHLHIGNARTALFNYLFARSQGGKFIIRIEDTDKKRNIEGGEQSQLNYLKWLGMDWDESVDIGGEYGPYRQSERNDIYKKYYEELLEKGLAYKCFCTEEELEKEREEQIARGEMPRYSGKHRNLTQEEQERFLAEGRQPSIRFRVPEGKIIAFNDIVKGEISFESDGIGDFVIVKKDGTPTYNFAVAIDDYLMKMTHVLRGEDHISNTPKQIMIFQAFGWDVPVFGHMTLIVNESRKKLSKRDESIIQFIEQYDELGYLPEALFNFIGLLGWSPVGEEELFTREQFIEIFDVNRLSKSPALFDMHKLKWVNNQYVKALDLDQVVELTLPHLQKAGKVGTELSAEEQEWVRKLISLYHEQLSYGAEIVELTDLFFKDEIEYNQEAKAVLEEEQVPEVLSVFAAKLEELEEFTPELIKASIKAVQKETGHKGKKLFMPIRVAVTGQTHGPELPQAIELIGRETAVRRLKSI.

A 'HIGH' region motif is present at residues 11-21 (PSPTGHLHIGN). The 'KMSKS' region signature appears at 252–256 (KLSKR). An ATP-binding site is contributed by Lys255.

This sequence belongs to the class-I aminoacyl-tRNA synthetase family. Glutamate--tRNA ligase type 1 subfamily. Monomer.

Its subcellular location is the cytoplasm. The catalysed reaction is tRNA(Glu) + L-glutamate + ATP = L-glutamyl-tRNA(Glu) + AMP + diphosphate. Functionally, catalyzes the attachment of glutamate to tRNA(Glu) in a two-step reaction: glutamate is first activated by ATP to form Glu-AMP and then transferred to the acceptor end of tRNA(Glu). In Bacillus velezensis (strain DSM 23117 / BGSC 10A6 / LMG 26770 / FZB42) (Bacillus amyloliquefaciens subsp. plantarum), this protein is Glutamate--tRNA ligase.